Consider the following 647-residue polypeptide: Threonine--tRNA ligase (647 aa).

One can recognise a TGS domain in the interval 1–61; it reads MIKITFPDGA…EEDGSIEIVT (61 aa). The catalytic stretch occupies residues 240–538; the sequence is DHRKLGKELD…LIETYKGAFP (299 aa). Residues Cys-334, His-385, and His-515 each coordinate Zn(2+).

It belongs to the class-II aminoacyl-tRNA synthetase family. As to quaternary structure, homodimer. The cofactor is Zn(2+).

It localises to the cytoplasm. It carries out the reaction tRNA(Thr) + L-threonine + ATP = L-threonyl-tRNA(Thr) + AMP + diphosphate + H(+). Functionally, catalyzes the attachment of threonine to tRNA(Thr) in a two-step reaction: L-threonine is first activated by ATP to form Thr-AMP and then transferred to the acceptor end of tRNA(Thr). Also edits incorrectly charged L-seryl-tRNA(Thr). This chain is Threonine--tRNA ligase, found in Streptococcus pyogenes serotype M18 (strain MGAS8232).